The following is a 72-amino-acid chain: Translation initiation factor IF-1 (72 aa).

An S1-like domain is found at Met-1 to Lys-72.

The protein belongs to the IF-1 family. Component of the 30S ribosomal translation pre-initiation complex which assembles on the 30S ribosome in the order IF-2 and IF-3, IF-1 and N-formylmethionyl-tRNA(fMet); mRNA recruitment can occur at any time during PIC assembly.

The protein localises to the cytoplasm. One of the essential components for the initiation of protein synthesis. Stabilizes the binding of IF-2 and IF-3 on the 30S subunit to which N-formylmethionyl-tRNA(fMet) subsequently binds. Helps modulate mRNA selection, yielding the 30S pre-initiation complex (PIC). Upon addition of the 50S ribosomal subunit IF-1, IF-2 and IF-3 are released leaving the mature 70S translation initiation complex. This chain is Translation initiation factor IF-1, found in Ruthia magnifica subsp. Calyptogena magnifica.